The sequence spans 435 residues: Nuclear receptor subfamily 6 group A member 1 (435 aa).

Residues 11 to 86 (QRACLICGDR…MGMNRKAIRE (76 aa)) constitute a DNA-binding region (nuclear receptor). NR C4-type zinc fingers lie at residues 14-34 (CLIC…CEGC) and 50-69 (CSRD…CQYC). The tract at residues 84 to 157 (IREDGMPGGR…VSTPSSSRSM (74 aa)) is disordered. The span at 121–141 (NTSWSNNGDSDHSSPGNGVSE) shows a compositional bias: polar residues. Over residues 142 to 156 (SNQPSPVSTPSSSRS) the composition is skewed to low complexity. Residues 204 to 435 (QSHTLINQLL…HSCKTSLTKE (232 aa)) form the NR LBD domain.

Belongs to the nuclear hormone receptor family. NR6 subfamily. In terms of assembly, homodimer.

The protein localises to the cytoplasm. The protein resides in the nucleus. In terms of biological role, probable orphan nuclear receptor. Binds to a response element containing repeats of the motif 5'-AGGTCA-3'. Required for anterior-posterior patterning during organogenesis. Acts with chordin to play a role in patterning the midbrain-hindbrain. Isoform Em is required for integrin-mediated cell matrix interaction during neurulation and for the morphogenetic movements leading to formation of the neural tube. Also mediates the effect of retinoic acid on primary neurogenesis. The sequence is that of Nuclear receptor subfamily 6 group A member 1 from Xenopus tropicalis (Western clawed frog).